The chain runs to 393 residues: Na(+)/H(+) antiporter NhaA (393 aa).

12 helical membrane passes run 23–43 (AGGI…NSPF), 58–78 (LSLA…LVGL), 96–116 (MLPG…FAVL), 126–146 (GWAV…SLLG), 155–175 (VFLA…IAIF), 178–198 (AEIS…LFVM), 201–221 (MGVV…FFVF), 224–244 (GVHA…KPAP), 265–285 (VAFI…FKGL), 298–318 (ILLG…WLAI), 334–354 (LYGV…IGLL), and 367–387 (IGVL…LRAA).

Belongs to the NhaA Na(+)/H(+) (TC 2.A.33) antiporter family.

Its subcellular location is the cell inner membrane. It catalyses the reaction Na(+)(in) + 2 H(+)(out) = Na(+)(out) + 2 H(+)(in). Na(+)/H(+) antiporter that extrudes sodium in exchange for external protons. In Brucella canis (strain ATCC 23365 / NCTC 10854 / RM-666), this protein is Na(+)/H(+) antiporter NhaA.